Reading from the N-terminus, the 416-residue chain is uncharacterized protein (416 aa).

4 residues coordinate [4Fe-4S] cluster: Cys63, Cys75, Cys78, and Cys152. S-adenosyl-L-methionine contacts are provided by Gln253, Phe280, Glu300, and Asp348. The active-site Nucleophile is Cys374.

This sequence belongs to the class I-like SAM-binding methyltransferase superfamily. RNA M5U methyltransferase family.

This is an uncharacterized protein from Agrobacterium fabrum (strain C58 / ATCC 33970) (Agrobacterium tumefaciens (strain C58)).